The primary structure comprises 68 residues: Large ribosomal subunit protein uL30 (68 aa).

It belongs to the universal ribosomal protein uL30 family. Part of the 50S ribosomal subunit.

In Bartonella henselae (strain ATCC 49882 / DSM 28221 / CCUG 30454 / Houston 1) (Rochalimaea henselae), this protein is Large ribosomal subunit protein uL30.